Reading from the N-terminus, the 308-residue chain is Ribosomal protein L11 methyltransferase (308 aa).

S-adenosyl-L-methionine-binding residues include threonine 148, glycine 169, aspartate 191, and asparagine 239.

This sequence belongs to the methyltransferase superfamily. PrmA family.

It is found in the cytoplasm. The enzyme catalyses L-lysyl-[protein] + 3 S-adenosyl-L-methionine = N(6),N(6),N(6)-trimethyl-L-lysyl-[protein] + 3 S-adenosyl-L-homocysteine + 3 H(+). Its function is as follows. Methylates ribosomal protein L11. This chain is Ribosomal protein L11 methyltransferase, found in Psychrobacter cryohalolentis (strain ATCC BAA-1226 / DSM 17306 / VKM B-2378 / K5).